Consider the following 87-residue polypeptide: Small ribosomal subunit protein bS20 (87 aa).

A compositionally biased stretch (basic residues) spans 1-11 (MANIKSKKKRI). A disordered region spans residues 1–25 (MANIKSKKKRIKTNEKARQRNKAIR).

The protein belongs to the bacterial ribosomal protein bS20 family.

Binds directly to 16S ribosomal RNA. The polypeptide is Small ribosomal subunit protein bS20 (Corynebacterium kroppenstedtii (strain DSM 44385 / JCM 11950 / CIP 105744 / CCUG 35717)).